A 918-amino-acid chain; its full sequence is Protein translocase subunit SecA (918 aa).

Residues Q87, 105-109 (GEGKT), and D500 each bind ATP. Residues 876 to 918 (AGALPVAETLERDTPESWRNTPRNAPCPCGSGKKYKHCHGQAR) are disordered. Zn(2+) is bound by residues C902, C904, C913, and H914. Positions 908 to 918 (KKYKHCHGQAR) are enriched in basic residues.

It belongs to the SecA family. As to quaternary structure, monomer and homodimer. Part of the essential Sec protein translocation apparatus which comprises SecA, SecYEG and auxiliary proteins SecDF-YajC and YidC. Zn(2+) serves as cofactor.

It is found in the cell inner membrane. Its subcellular location is the cytoplasm. The enzyme catalyses ATP + H2O + cellular proteinSide 1 = ADP + phosphate + cellular proteinSide 2.. Functionally, part of the Sec protein translocase complex. Interacts with the SecYEG preprotein conducting channel. Has a central role in coupling the hydrolysis of ATP to the transfer of proteins into and across the cell membrane, serving both as a receptor for the preprotein-SecB complex and as an ATP-driven molecular motor driving the stepwise translocation of polypeptide chains across the membrane. In Rhodospirillum centenum (strain ATCC 51521 / SW), this protein is Protein translocase subunit SecA.